The sequence spans 509 residues: Glycogen synthase (509 aa).

An ADP-alpha-D-glucose-binding site is contributed by K47.

Belongs to the glycosyltransferase 1 family. Bacterial/plant glycogen synthase subfamily.

The catalysed reaction is [(1-&gt;4)-alpha-D-glucosyl](n) + ADP-alpha-D-glucose = [(1-&gt;4)-alpha-D-glucosyl](n+1) + ADP + H(+). It functions in the pathway glycan biosynthesis; glycogen biosynthesis. Functionally, synthesizes alpha-1,4-glucan chains using ADP-glucose. In Xanthomonas oryzae pv. oryzae (strain PXO99A), this protein is Glycogen synthase.